The sequence spans 215 residues: Meiotic chromosome segregation protein P8B7.28c (215 aa).

The tract at residues 159–202 (TINSEYADDVSDNTDEERTESKGQQESNSAEEYDDDDSDEDRME) is disordered. 2 stretches are compositionally biased toward acidic residues: residues 164–176 (YADD…DEER) and 187–201 (SAEE…EDRM).

Its subcellular location is the nucleus. The protein localises to the nucleolus. In terms of biological role, required for meiotic chromosome segregation. This Schizosaccharomyces pombe (strain 972 / ATCC 24843) (Fission yeast) protein is Meiotic chromosome segregation protein P8B7.28c.